Reading from the N-terminus, the 76-residue chain is Sec-independent protein translocase protein TatA (76 aa).

The helical transmembrane segment at 1–21 (MGGISIWQLLIIALIVVLLFG) threads the bilayer. Residues 43–76 (MSSEDEKKAIEDTSAEKTAQTEEKKTESKDKEQA) are disordered. Basic and acidic residues predominate over residues 46–76 (EDEKKAIEDTSAEKTAQTEEKKTESKDKEQA).

The protein belongs to the TatA/E family. As to quaternary structure, the Tat system comprises two distinct complexes: a TatABC complex, containing multiple copies of TatA, TatB and TatC subunits, and a separate TatA complex, containing only TatA subunits. Substrates initially bind to the TatABC complex, which probably triggers association of the separate TatA complex to form the active translocon.

The protein resides in the cell inner membrane. In terms of biological role, part of the twin-arginine translocation (Tat) system that transports large folded proteins containing a characteristic twin-arginine motif in their signal peptide across membranes. TatA could form the protein-conducting channel of the Tat system. The polypeptide is Sec-independent protein translocase protein TatA (Shewanella loihica (strain ATCC BAA-1088 / PV-4)).